Consider the following 410-residue polypeptide: Zinc finger TRAF-type-containing protein 1 (410 aa).

Over residues 1–13 (MSGAEEAGGGGPA) the composition is skewed to gly residues. A disordered region spans residues 1-22 (MSGAEEAGGGGPAAGPAGSVPA). The RING-type; degenerate zinc-finger motif lies at 117–162 (CTVCLDLPKASVYQCTNGHLMCAGCFIHLLADARLKEEQATCPNCR). Residues 158-231 (CPNCRCEISK…PWHGPFHELT (74 aa)) form a TRAF-type zinc finger.

This sequence belongs to the ZFTRAF1 family. In terms of assembly, interacts with LGALS3.

It is found in the cytoplasm. The protein localises to the perinuclear region. In Bos taurus (Bovine), this protein is Zinc finger TRAF-type-containing protein 1.